Here is a 72-residue protein sequence, read N- to C-terminus: UPF0337 protein bsl2407 (72 aa).

The tract at residues 1 to 55 is disordered; the sequence is MGSTTDKIKGNANEAIGKAKQGIGEATGSDRLKGEGVVQEVKGKGQQAMGDAKDA. The span at 35–47 shows a compositional bias: low complexity; the sequence is EGVVQEVKGKGQQ.

The protein belongs to the UPF0337 (CsbD) family.

The polypeptide is UPF0337 protein bsl2407 (Bradyrhizobium diazoefficiens (strain JCM 10833 / BCRC 13528 / IAM 13628 / NBRC 14792 / USDA 110)).